The following is a 218-amino-acid chain: Glutathione S-transferase A (218 aa).

Serine 1 carries the post-translational modification N-acetylserine. Positions 2-82 (GKPVLHYFNV…YIATKYNLYG (81 aa)) constitute a GST N-terminal domain. The residue at position 3 (lysine 3) is an N6-succinyllysine. Glutathione-binding positions include tyrosine 8, lysine 44, 53-54 (QV), and 66-67 (QS). Residues 84–206 (DTKERLLIDM…LQPGSQRKPF (123 aa)) enclose the GST C-terminal domain.

It belongs to the GST superfamily. Alpha family. Homodimer or heterodimer of GSTA1 and GSTA2.

The protein resides in the cytoplasm. The enzyme catalyses RX + glutathione = an S-substituted glutathione + a halide anion + H(+). It carries out the reaction prostaglandin A2 + glutathione = prostaglandin A2-S-(R)-glutathione. The catalysed reaction is prostaglandin J2 + glutathione = prostaglandin J2-S-(R)-glutathione. It catalyses the reaction (13S)-hydroperoxy-(9Z,11E)-octadecadienoate + 2 glutathione = (13S)-hydroxy-(9Z,11E)-octadecadienoate + glutathione disulfide + H2O. The enzyme catalyses androst-5-ene-3,17-dione = androst-4-ene-3,17-dione. Functionally, glutathione S-transferase that catalyzes the nucleophilic attack of the sulfur atom of glutathione on the electrophilic groups of a wide range of exogenous and endogenous compounds. Involved in the formation of glutathione conjugates of both prostaglandin A2 (PGA2) and prostaglandin J2 (PGJ2). It also catalyzes the isomerization of D5-androstene-3,17-dione (AD) into D4-androstene-3,17-dione and may therefore play an important role in hormone biosynthesis. Through its glutathione-dependent peroxidase activity toward the fatty acid hydroperoxide (13S)-hydroperoxy-(9Z,11E)-octadecadienoate/13-HPODE it is also involved in the metabolism of oxidized linoleic acid. The protein is Glutathione S-transferase A of Cavia porcellus (Guinea pig).